Here is a 500-residue protein sequence, read N- to C-terminus: Probable cytosol aminopeptidase (500 aa).

Mn(2+)-binding residues include lysine 265 and aspartate 270. Lysine 277 is an active-site residue. Positions 288, 347, and 349 each coordinate Mn(2+). Arginine 351 is an active-site residue.

It belongs to the peptidase M17 family. It depends on Mn(2+) as a cofactor.

It is found in the cytoplasm. It carries out the reaction Release of an N-terminal amino acid, Xaa-|-Yaa-, in which Xaa is preferably Leu, but may be other amino acids including Pro although not Arg or Lys, and Yaa may be Pro. Amino acid amides and methyl esters are also readily hydrolyzed, but rates on arylamides are exceedingly low.. The catalysed reaction is Release of an N-terminal amino acid, preferentially leucine, but not glutamic or aspartic acids.. Functionally, presumably involved in the processing and regular turnover of intracellular proteins. Catalyzes the removal of unsubstituted N-terminal amino acids from various peptides. This chain is Probable cytosol aminopeptidase, found in Rickettsia rickettsii (strain Iowa).